A 262-amino-acid polypeptide reads, in one-letter code: Phosphate import ATP-binding protein PstB (262 aa).

Residues 16 to 257 (IDVRNLNFYY…PHRKETEDYI (242 aa)) form the ABC transporter domain. An ATP-binding site is contributed by 48-55 (GPSGCGKS).

This sequence belongs to the ABC transporter superfamily. Phosphate importer (TC 3.A.1.7) family. The complex is composed of two ATP-binding proteins (PstB), two transmembrane proteins (PstC and PstA) and a solute-binding protein (PstS).

The protein localises to the cell inner membrane. The enzyme catalyses phosphate(out) + ATP + H2O = ADP + 2 phosphate(in) + H(+). Its function is as follows. Part of the ABC transporter complex PstSACB involved in phosphate import. Responsible for energy coupling to the transport system. This chain is Phosphate import ATP-binding protein PstB, found in Cupriavidus pinatubonensis (strain JMP 134 / LMG 1197) (Cupriavidus necator (strain JMP 134)).